The sequence spans 164 residues: V-type proton ATPase 16 kDa proteolipid subunit (164 aa).

Residues 1–10 (MSDLCPPTAP) lie on the Lumenal side of the membrane. The chain crosses the membrane as a helical span at residues 11 to 31 (FFGFMGAAVALIFANLGAAYG). Topologically, residues 32–53 (TAKSGVGVSSMGVMKPDLVMKS) are cytoplasmic. The chain crosses the membrane as a helical span at residues 54-74 (IIPVVMAGVLGIYGLIIAVII). The Lumenal portion of the chain corresponds to 75–96 (GNGVKGPEGGKPQYSSFTGFAH). The chain crosses the membrane as a helical span at residues 97 to 118 (LAAGLACGLSGMAAGIAIGIVG). The Cytoplasmic portion of the chain corresponds to 119–130 (DAGVRASAQQAK). A helical transmembrane segment spans residues 131-155 (LYVGMVLILIFAEALGLYGLIVGLI). Residues 156–164 (LTSKEAPCS) are Lumenal-facing.

This sequence belongs to the V-ATPase proteolipid subunit family. V-ATPase is a heteromultimeric enzyme composed of a peripheral catalytic V1 complex (main components: subunits A, B, C, D, E, and F) attached to an integral membrane V0 proton pore complex (main component: the proteolipid protein; which is present as a hexamer that forms the proton-conducting pore).

It localises to the vacuole membrane. Its function is as follows. Proton-conducting pore forming subunit of the membrane integral V0 complex of vacuolar ATPase. V-ATPase is responsible for acidifying a variety of intracellular compartments in eukaryotic cells. The sequence is that of V-type proton ATPase 16 kDa proteolipid subunit (VAP) from Chrysotila carterae (Marine alga).